A 45-amino-acid chain; its full sequence is MQKYVCNVCGYEYDPAEHDNVPFDQLPDDWCCPVCGVSKDQFSPA.

Position 1 is an N-formylmethionine (Met-1). The region spanning 1 to 45 (MQKYVCNVCGYEYDPAEHDNVPFDQLPDDWCCPVCGVSKDQFSPA) is the Rubredoxin-like domain. Positions 6, 9, 32, and 35 each coordinate Fe cation.

It belongs to the rubredoxin family. It depends on Fe(3+) as a cofactor.

It is found in the cytoplasm. Its function is as follows. Rubredoxin is a small nonheme, iron protein lacking acid-labile sulfide. Its single Fe, chelated to 4 Cys, functions as an electron acceptor and may also stabilize the conformation of the molecule. In terms of biological role, electron acceptor for cytoplasmic lactate dehydrogenase. This Desulfovibrio desulfuricans (strain ATCC 27774 / DSM 6949 / MB) protein is Rubredoxin-1 (rd1).